The sequence spans 290 residues: Plasma membrane ascorbate-dependent reductase CYBRD1 (290 aa).

Over 1–7 the chain is Cytoplasmic; the sequence is MAMEGYR. A helical membrane pass occupies residues 8-32; that stretch reads GFLGLLVSALLVGFLSVIFVLIWVL. The Cytochrome b561 domain maps to 15-220; that stretch reads SALLVGFLSV…FGALIFWIVT (206 aa). Topologically, residues 33–47 are extracellular; it reads HFREGLGWNGSGLEF. A helical transmembrane segment spans residues 48-69; the sequence is NWHPVLAVTGFVFIQGIAIIVY. The heme b site is built by histidine 50, arginine 70, and lysine 79. The Cytoplasmic portion of the chain corresponds to 70–78; it reads RLPWTWKCS. Positions 79 and 83 each coordinate L-ascorbate. The helical transmembrane segment at 79–105 threads the bilayer; that stretch reads KLLMKSIHAGLNAVAAILAIISVVAVF. Histidine 86 is a heme b binding site. The Extracellular segment spans residues 106-118; that stretch reads EYHNVQKVPHMYS. Histidine 108 provides a ligand contact to Fe(3+). Residues 115 to 118 and histidine 120 contribute to the heme b site; that span reads HMYS. Residues 119–144 form a helical membrane-spanning segment; it reads LHSWVGLTALILYIQQLVVGFFVFLL. The Cytoplasmic portion of the chain corresponds to 145 to 151; that stretch reads PWAPPSL. Arginine 152 contributes to the L-ascorbate binding site. Residues 152-179 traverse the membrane as a helical segment; that stretch reads RAIVMPIHVYSGLLLFGTVIATVLMGVT. The heme b site is built by histidine 159 and glutamate 180. The Extracellular portion of the chain corresponds to 180–197; it reads EKLFFVLKHPSYHSFPPE. Residues 198-222 traverse the membrane as a helical segment; sequence GVFTNTLGLLILVFGALIFWIVTRP. Residues 223 to 290 lie on the Cytoplasmic side of the membrane; it reads QWKRPREPGS…LADSGQRSTM (68 aa). Residue lysine 225 coordinates heme b. The residue at position 232 (serine 232) is a Phosphoserine. Residues 257–290 are disordered; the sequence is SMDAADPADAESSSEGAARKRTLGLADSGQRSTM. Residues 260–272 are compositionally biased toward low complexity; it reads AADPADAESSSEG. The residue at position 289 (threonine 289) is a Phosphothreonine.

Homodimer. Heme b is required as a cofactor. In terms of tissue distribution, highly expressed in the brush-border membrane of duodenal enterocytes (at protein level). Also expressed in liver and spleen.

Its subcellular location is the cell membrane. The protein resides in the apical cell membrane. The enzyme catalyses Fe(3+)(out) + L-ascorbate(in) = monodehydro-L-ascorbate radical(in) + Fe(2+)(out) + H(+). The catalysed reaction is Cu(2+)(out) + L-ascorbate(in) = Cu(+)(out) + monodehydro-L-ascorbate radical(in) + H(+). It carries out the reaction monodehydro-L-ascorbate radical(out) + L-ascorbate(in) = monodehydro-L-ascorbate radical(in) + L-ascorbate(out). Its function is as follows. Plasma membrane reductase that uses cytoplasmic ascorbate as an electron donor to reduce extracellular Fe(3+) into Fe(2+). Probably functions in dietary iron absorption at the brush border of duodenal enterocytes by producing Fe(2+), the divalent form of iron that can be transported into enterocytes. It is also able to reduce extracellular monodehydro-L-ascorbate and may be involved in extracellular ascorbate regeneration by erythrocytes in blood. May also act as a ferrireductase in airway epithelial cells. May also function as a cupric transmembrane reductase. This is Plasma membrane ascorbate-dependent reductase CYBRD1 from Mus musculus (Mouse).